Here is a 109-residue protein sequence, read N- to C-terminus: MSLTADPPACTVPAAGGSSTHKLVNGGAEKIIFKIKSSNNNEYRIAPVFGFVDPSGSKDVVITRTAGAPKEDKLVIHFAPAPADATDAQAAFAAVTPAGTVTIPMSATA.

Positions serine 2–alanine 109 constitute an MSP domain.

As to expression, expressed at higher level in testis.

In Caenorhabditis elegans, this protein is Sperm-specific class P protein 10 (ssp-10).